A 365-amino-acid polypeptide reads, in one-letter code: 3-dehydroquinate synthase (365 aa).

Residues 72–77, 130–131, K142, and K151 each bind NAD(+); these read SGEKEK and TT. Residues E184, H247, and H264 each coordinate Zn(2+).

This sequence belongs to the sugar phosphate cyclases superfamily. Dehydroquinate synthase family. The cofactor is Co(2+). Zn(2+) serves as cofactor. NAD(+) is required as a cofactor.

Its subcellular location is the cytoplasm. It catalyses the reaction 7-phospho-2-dehydro-3-deoxy-D-arabino-heptonate = 3-dehydroquinate + phosphate. Its pathway is metabolic intermediate biosynthesis; chorismate biosynthesis; chorismate from D-erythrose 4-phosphate and phosphoenolpyruvate: step 2/7. Catalyzes the conversion of 3-deoxy-D-arabino-heptulosonate 7-phosphate (DAHP) to dehydroquinate (DHQ). This Bacillus cereus (strain AH187) protein is 3-dehydroquinate synthase.